Here is a 463-residue protein sequence, read N- to C-terminus: MDFGVLPPEINSGRMYAGPGSGPMLAAAAAWDGLATELQSTAADYGSVISVLTGVWSGQSSGTMAAAAAPYVAWMSATAALAREAAAQASAAAAAYEAAFAATVPPPVVAANRAELAVLAATNIFGQNTGAIAAAEARYAEMWAQDAAAMYGYAGSSSVATQVTPFAAPPPTTNAAGLATQGVAVAQAVGASAGNARSLVSEVLEFLATAGTNYNKTVASLMNAVTGVPYASSVYNSMLGLGFAESKMVLPANDTVISTIFGMVQFQKFFNPVTPFNPDLIPKSALGAGLGLRSAISSGLGSTAPAISAGASQAGSVGGMSVPPSWAAATPAIRTVAAVFSSTGLQAVPAAAISEGSLLSQMALASVAGGALGGAAARATGGFLGGGRVTAVKKSLKDSDSPDKLRRVVAHMMEKPESVQHWHTDEDGLDDLLAELKKKPGIHAVHMAGGNKAEIAPTISESG.

It belongs to the mycobacterial PPE family.

This is an uncharacterized protein from Mycobacterium tuberculosis (strain ATCC 25618 / H37Rv).